A 241-amino-acid chain; its full sequence is Ashwin (241 aa).

3 disordered regions span residues methionine 1–serine 21, lysine 82–alanine 102, and lysine 212–proline 241. Residues glycine 11–serine 21 are compositionally biased toward basic and acidic residues.

Belongs to the ashwin family.

The protein localises to the nucleus. The protein is Ashwin of Gallus gallus (Chicken).